Reading from the N-terminus, the 932-residue chain is DNA mismatch repair protein MutS (932 aa).

620-627 lines the ATP pocket; that stretch reads GPNMAGKS.

Belongs to the DNA mismatch repair MutS family.

Functionally, this protein is involved in the repair of mismatches in DNA. It is possible that it carries out the mismatch recognition step. This protein has a weak ATPase activity. This Lachnoclostridium phytofermentans (strain ATCC 700394 / DSM 18823 / ISDg) (Clostridium phytofermentans) protein is DNA mismatch repair protein MutS.